Here is a 186-residue protein sequence, read N- to C-terminus: Putative manganese efflux pump MntP (186 aa).

6 consecutive transmembrane segments (helical) span residues 3–23 (PIALLLLAFAMSTDAFAAAIG), 39–59 (IGIIFGSIEAITPLVGWLIGK), 65–85 (VEAWDHWIAFSLLTVLGLHMI), 109–129 (CLTAFSTSIDAMAVGVSLAFI), 133–153 (IWIASALIGLATTLMVTIGIM), and 166–186 (AEIFGGLTLIAVGAWILYGQL).

This sequence belongs to the MntP (TC 9.B.29) family.

It localises to the cell inner membrane. Functionally, probably functions as a manganese efflux pump. This Alcanivorax borkumensis (strain ATCC 700651 / DSM 11573 / NCIMB 13689 / SK2) protein is Putative manganese efflux pump MntP.